We begin with the raw amino-acid sequence, 28 residues long: Unknown protein from spot 154 of 2D-PAGE of etiolated coleoptile (28 aa).

This is Unknown protein from spot 154 of 2D-PAGE of etiolated coleoptile from Zea mays (Maize).